We begin with the raw amino-acid sequence, 432 residues long: 23S rRNA (uracil(1939)-C(5))-methyltransferase RlmD (432 aa).

The region spanning 10–68 is the TRAM domain; that stretch reads RVTTREIITVTTDGLDAFGQGVARHHGKALFIAGLLPGERAEVVLSEDKKQFARGDVKK. The [4Fe-4S] cluster site is built by Cys-81, Cys-87, Cys-90, and Cys-162. 6 residues coordinate S-adenosyl-L-methionine: Gln-265, Phe-294, Asn-299, Glu-315, Asn-342, and Asp-363. Residue Cys-389 is the Nucleophile of the active site.

Belongs to the class I-like SAM-binding methyltransferase superfamily. RNA M5U methyltransferase family. RlmD subfamily.

It carries out the reaction uridine(1939) in 23S rRNA + S-adenosyl-L-methionine = 5-methyluridine(1939) in 23S rRNA + S-adenosyl-L-homocysteine + H(+). In terms of biological role, catalyzes the formation of 5-methyl-uridine at position 1939 (m5U1939) in 23S rRNA. The protein is 23S rRNA (uracil(1939)-C(5))-methyltransferase RlmD of Cronobacter sakazakii (strain ATCC BAA-894) (Enterobacter sakazakii).